A 93-amino-acid chain; its full sequence is Small ribosomal subunit protein uS19 (93 aa).

The protein belongs to the universal ribosomal protein uS19 family.

In terms of biological role, protein S19 forms a complex with S13 that binds strongly to the 16S ribosomal RNA. This is Small ribosomal subunit protein uS19 from Campylobacter lari (strain RM2100 / D67 / ATCC BAA-1060).